The following is a 483-amino-acid chain: ATP synthase subunit beta (483 aa).

Residue 169–176 participates in ATP binding; sequence GGAGVGKT.

This sequence belongs to the ATPase alpha/beta chains family. F-type ATPases have 2 components, CF(1) - the catalytic core - and CF(0) - the membrane proton channel. CF(1) has five subunits: alpha(3), beta(3), gamma(1), delta(1), epsilon(1). CF(0) has three main subunits: a(1), b(2) and c(9-12). The alpha and beta chains form an alternating ring which encloses part of the gamma chain. CF(1) is attached to CF(0) by a central stalk formed by the gamma and epsilon chains, while a peripheral stalk is formed by the delta and b chains.

Its subcellular location is the cell membrane. The catalysed reaction is ATP + H2O + 4 H(+)(in) = ADP + phosphate + 5 H(+)(out). Produces ATP from ADP in the presence of a proton gradient across the membrane. The catalytic sites are hosted primarily by the beta subunits. The protein is ATP synthase subunit beta of Rhodococcus erythropolis (strain PR4 / NBRC 100887).